The following is a 272-amino-acid chain: Tryptophan synthase alpha chain (272 aa).

Catalysis depends on proton acceptor residues E49 and D60.

The protein belongs to the TrpA family. In terms of assembly, tetramer of two alpha and two beta chains.

The catalysed reaction is (1S,2R)-1-C-(indol-3-yl)glycerol 3-phosphate + L-serine = D-glyceraldehyde 3-phosphate + L-tryptophan + H2O. It functions in the pathway amino-acid biosynthesis; L-tryptophan biosynthesis; L-tryptophan from chorismate: step 5/5. Functionally, the alpha subunit is responsible for the aldol cleavage of indoleglycerol phosphate to indole and glyceraldehyde 3-phosphate. The polypeptide is Tryptophan synthase alpha chain (Polaromonas sp. (strain JS666 / ATCC BAA-500)).